The primary structure comprises 149 residues: General odorant-binding protein 99b (149 aa).

The N-terminal stretch at methionine 1–alanine 16 is a signal peptide. Cystine bridges form between cysteine 40-cysteine 71, cysteine 67-cysteine 125, and cysteine 114-cysteine 134.

Belongs to the PBP/GOBP family. Expressed in adult olfactory system. Expressed in subsets of sensilla in both olfactory organs, the maxillary palps, and third antennal segments.

The protein resides in the secreted. Present in the aqueous fluid surrounding olfactory sensory dendrites and are thought to aid in the capture and transport of hydrophobic odorants into and through this fluid. This chain is General odorant-binding protein 99b (Obp99b), found in Drosophila melanogaster (Fruit fly).